A 269-amino-acid chain; its full sequence is Protein-L-isoaspartate O-methyltransferase (269 aa).

Residues 1–53 (MSAGQRPAPKFPLRLDQVKPAGRSGAAPLLRPQRPLHQAATERGRGTTPAGLG) are disordered. Residue S113 is part of the active site.

Belongs to the methyltransferase superfamily. L-isoaspartyl/D-aspartyl protein methyltransferase family.

The protein localises to the cytoplasm. The enzyme catalyses [protein]-L-isoaspartate + S-adenosyl-L-methionine = [protein]-L-isoaspartate alpha-methyl ester + S-adenosyl-L-homocysteine. Functionally, catalyzes the methyl esterification of L-isoaspartyl residues in peptides and proteins that result from spontaneous decomposition of normal L-aspartyl and L-asparaginyl residues. It plays a role in the repair and/or degradation of damaged proteins. The chain is Protein-L-isoaspartate O-methyltransferase from Methylibium petroleiphilum (strain ATCC BAA-1232 / LMG 22953 / PM1).